A 107-amino-acid polypeptide reads, in one-letter code: uncharacterized protein (107 aa).

The helical transmembrane segment at 12 to 32 threads the bilayer; sequence IILNIFLALLLVYFIFHCIYG.

It localises to the membrane. This is an uncharacterized protein from Rickettsia prowazekii (strain Madrid E).